The sequence spans 255 residues: Homeobox protein Hox-D4 (255 aa).

The interval 31–127 (EQGADYYGGG…PKQPPSGTAL (97 aa)) is disordered. Residues 94–107 (EPCPAPPAPPPAPL) show a composition bias toward pro residues. The short motif at 133-138 (VYPWMK) is the Antp-type hexapeptide element. Positions 154 to 213 (PKRSRTAYTRQQVLELEKEFHFNRYLTRRRRIEIAHTLCLSERQIKIWFQNRRMKWKKDH) form a DNA-binding region, homeobox. A disordered region spans residues 212–255 (DHKLPNTKGRSSSSSSSSSCSSSVAPSQHLQPMAKDHHTDLTTL). Over residues 222–234 (SSSSSSSSSCSSS) the composition is skewed to low complexity. Residues 245-255 (AKDHHTDLTTL) are compositionally biased toward basic and acidic residues.

The protein belongs to the Antp homeobox family. Deformed subfamily. As to quaternary structure, forms a DNA-binding heterodimer with transcription factor PBX1.

Its subcellular location is the nucleus. Functionally, sequence-specific transcription factor which is part of a developmental regulatory system that provides cells with specific positional identities on the anterior-posterior axis. This chain is Homeobox protein Hox-D4 (HOXD4), found in Homo sapiens (Human).